The sequence spans 452 residues: Probable glycine dehydrogenase (decarboxylating) subunit 1 (452 aa).

It belongs to the GcvP family. N-terminal subunit subfamily. As to quaternary structure, the glycine cleavage system is composed of four proteins: P, T, L and H. In this organism, the P 'protein' is a heterodimer of two subunits.

It catalyses the reaction N(6)-[(R)-lipoyl]-L-lysyl-[glycine-cleavage complex H protein] + glycine + H(+) = N(6)-[(R)-S(8)-aminomethyldihydrolipoyl]-L-lysyl-[glycine-cleavage complex H protein] + CO2. Functionally, the glycine cleavage system catalyzes the degradation of glycine. The P protein binds the alpha-amino group of glycine through its pyridoxal phosphate cofactor; CO(2) is released and the remaining methylamine moiety is then transferred to the lipoamide cofactor of the H protein. In Alcanivorax borkumensis (strain ATCC 700651 / DSM 11573 / NCIMB 13689 / SK2), this protein is Probable glycine dehydrogenase (decarboxylating) subunit 1.